The sequence spans 520 residues: FAD-linked oxidoreductase OXR2 (520 aa).

The first 23 residues, 1–23, serve as a signal peptide directing secretion; that stretch reads MKSFSLLASAGLATLASLPLTMA. 4 N-linked (GlcNAc...) asparagine glycosylation sites follow: asparagine 77, asparagine 220, asparagine 378, and asparagine 390. Residues 79 to 251 enclose the FAD-binding PCMH-type domain; that stretch reads SRPTIRLVVV…TSFQSKIYPR (173 aa).

This sequence belongs to the oxygen-dependent FAD-linked oxidoreductase family. Requires FAD as cofactor.

The protein operates within polyketide biosynthesis. Functionally, FAD-linked oxidoreductase; part of the gene cluster that mediates the biosynthesis of pyriculol and pyriculariol, two heptaketides that induce lesion formation upon application on rice leaves but are dispensable for pathogenicity. The highly reducing polyketide synthase synthesizes the heptaketide backbone of pyriculol and pyriculariol. Pyriculol and pyriculariol contain several hydroxyl moieties and double bonds, so it can be assumed that several reduction steps occur during biosynthesis. These reactions could be executed by PKS19 itself or partly by the tailoring enzymes OXR1, OXR2, RED1, RED2 or RED3, identified within the cluster. The FAD-linked oxidoreductase OXR1 is the only tailoring enzyme for which the function has been determined yet, and is involved in the oxidation of dihydropyriculol and dihydropyriculariol into pyriculol and pyriculariol, respectively. The protein is FAD-linked oxidoreductase OXR2 of Pyricularia oryzae (strain 70-15 / ATCC MYA-4617 / FGSC 8958) (Rice blast fungus).